A 101-amino-acid polypeptide reads, in one-letter code: Small ribosomal subunit protein uS10 (101 aa).

Belongs to the universal ribosomal protein uS10 family. As to quaternary structure, part of the 30S ribosomal subunit.

Involved in the binding of tRNA to the ribosomes. The sequence is that of Small ribosomal subunit protein uS10 from Rhodococcus erythropolis (strain PR4 / NBRC 100887).